The following is a 479-amino-acid chain: Ribulose bisphosphate carboxylase large chain (479 aa).

The propeptide occupies Met1–Ser2. Residue Pro3 is modified to N-acetylproline. Residues Asn123 and Thr173 each coordinate substrate. The active-site Proton acceptor is Lys175. Lys177 is a binding site for substrate. Mg(2+) contacts are provided by Lys201, Asp203, and Glu204. Lys201 bears the N6-carboxylysine mark. Catalysis depends on His294, which acts as the Proton acceptor. Residues Arg295, His327, and Ser379 each coordinate substrate.

It belongs to the RuBisCO large chain family. Type I subfamily. In terms of assembly, heterohexadecamer of 8 large chains and 8 small chains; disulfide-linked. The disulfide link is formed within the large subunit homodimers. Mg(2+) serves as cofactor. In terms of processing, the disulfide bond which can form in the large chain dimeric partners within the hexadecamer appears to be associated with oxidative stress and protein turnover.

The protein resides in the plastid. It localises to the chloroplast. It carries out the reaction 2 (2R)-3-phosphoglycerate + 2 H(+) = D-ribulose 1,5-bisphosphate + CO2 + H2O. The catalysed reaction is D-ribulose 1,5-bisphosphate + O2 = 2-phosphoglycolate + (2R)-3-phosphoglycerate + 2 H(+). RuBisCO catalyzes two reactions: the carboxylation of D-ribulose 1,5-bisphosphate, the primary event in carbon dioxide fixation, as well as the oxidative fragmentation of the pentose substrate in the photorespiration process. Both reactions occur simultaneously and in competition at the same active site. This Hordeum vulgare (Barley) protein is Ribulose bisphosphate carboxylase large chain.